Here is a 505-residue protein sequence, read N- to C-terminus: Activin receptor type-1B (505 aa).

An N-terminal signal peptide occupies residues 1-23 (MAESAGASSFFPLVVLLLAGSGG). Residues 24–126 (SGPRGIQALL…AHPSMWGPVE (103 aa)) are Extracellular-facing. N43 carries an N-linked (GlcNAc...) asparagine glycan. The helical transmembrane segment at 127–149 (LVGIIAGPVFLLFLIIIIVFLVI) threads the bilayer. Over 150–505 (NYHQRVYHNR…QLSVQEDVKI (356 aa)) the chain is Cytoplasmic. Residues 177–206 (KTLQDLVYDLSTSGSGSGLPLFVQRTVART) enclose the GS domain. The Protein kinase domain maps to 207–497 (IVLQEIIGKG…LRIKKTLSQL (291 aa)). ATP is bound by residues 213 to 221 (IGKGRFGEV) and K234. D335 (proton acceptor) is an active-site residue. Residue Y380 is modified to Phosphotyrosine.

This sequence belongs to the protein kinase superfamily. TKL Ser/Thr protein kinase family. TGFB receptor subfamily. As to quaternary structure, forms an activin receptor complex with activin receptor type-2 (ACVR2A or ACVR2B). Part of a complex consisting of MAGI2/ARIP1, ACVR2A, ACVR1B and SMAD3. Interacts with SMAD2 and SMAD3. Interacts with SMAD7. Interacts with FKBP1A. Interacts with IGSF1. Interacts with CRIPTO. Interacts with TDP2. Interacts with TSC22D1/TSC-22. In terms of processing, autophosphorylated. Phosphorylated by activin receptor type-2 (ACVR2A or ACVR2B) in response to activin-binding at serine and threonine residues in the GS domain. Phosphorylation of ACVR1B by activin receptor type-2 regulates association with SMAD7. Post-translationally, ubiquitinated. Level of ubiquitination is regulated by the SMAD7-SMURF1 complex. Ubiquitinated.

Its subcellular location is the cell membrane. It carries out the reaction L-threonyl-[receptor-protein] + ATP = O-phospho-L-threonyl-[receptor-protein] + ADP + H(+). The enzyme catalyses L-seryl-[receptor-protein] + ATP = O-phospho-L-seryl-[receptor-protein] + ADP + H(+). Activin receptor type-2 (ACVR2A or ACVR2B) activates the type-1 receptor through phosphorylation of its regulatory GS domain. Its function is as follows. Transmembrane serine/threonine kinase activin type-1 receptor forming an activin receptor complex with activin receptor type-2 (ACVR2A or ACVR2B). Transduces the activin signal from the cell surface to the cytoplasm and is thus regulating a many physiological and pathological processes including neuronal differentiation and neuronal survival, hair follicle development and cycling, FSH production by the pituitary gland, wound healing, extracellular matrix production, immunosuppression and carcinogenesis. Activin is also thought to have a paracrine or autocrine role in follicular development in the ovary. Within the receptor complex, type-2 receptors (ACVR2A and/or ACVR2B) act as a primary activin receptors whereas the type-1 receptors like ACVR1B act as downstream transducers of activin signals. Activin binds to type-2 receptor at the plasma membrane and activates its serine-threonine kinase. The activated receptor type-2 then phosphorylates and activates the type-1 receptor such as ACVR1B. Once activated, the type-1 receptor binds and phosphorylates the SMAD proteins SMAD2 and SMAD3, on serine residues of the C-terminal tail. Soon after their association with the activin receptor and subsequent phosphorylation, SMAD2 and SMAD3 are released into the cytoplasm where they interact with the common partner SMAD4. This SMAD complex translocates into the nucleus where it mediates activin-induced transcription. Inhibitory SMAD7, which is recruited to ACVR1B through FKBP1A, can prevent the association of SMAD2 and SMAD3 with the activin receptor complex, thereby blocking the activin signal. Activin signal transduction is also antagonized by the binding to the receptor of inhibin-B via the IGSF1 inhibin coreceptor. ACVR1B also phosphorylates TDP2. In Mus musculus (Mouse), this protein is Activin receptor type-1B (Acvr1b).